We begin with the raw amino-acid sequence, 336 residues long: Holliday junction branch migration complex subunit RuvB (336 aa).

A large ATPase domain (RuvB-L) region spans residues 4-184 (ADRLISAGTT…FGIVQRLEFY (181 aa)). ATP is bound by residues Ile23, Arg24, Gly65, Lys68, Thr69, Thr70, 131 to 133 (EDY), Arg174, Tyr184, and Arg221. Thr69 contributes to the Mg(2+) binding site. The interval 185–255 (QVPDLQYIVS…IAAQALDMLN (71 aa)) is small ATPAse domain (RuvB-S). The segment at 258-336 (AEGFDYMDRK…HFGITPPEMP (79 aa)) is head domain (RuvB-H). Positions 294, 313, and 318 each coordinate DNA.

Belongs to the RuvB family. As to quaternary structure, homohexamer. Forms an RuvA(8)-RuvB(12)-Holliday junction (HJ) complex. HJ DNA is sandwiched between 2 RuvA tetramers; dsDNA enters through RuvA and exits via RuvB. An RuvB hexamer assembles on each DNA strand where it exits the tetramer. Each RuvB hexamer is contacted by two RuvA subunits (via domain III) on 2 adjacent RuvB subunits; this complex drives branch migration. In the full resolvosome a probable DNA-RuvA(4)-RuvB(12)-RuvC(2) complex forms which resolves the HJ.

The protein localises to the cytoplasm. The enzyme catalyses ATP + H2O = ADP + phosphate + H(+). The RuvA-RuvB-RuvC complex processes Holliday junction (HJ) DNA during genetic recombination and DNA repair, while the RuvA-RuvB complex plays an important role in the rescue of blocked DNA replication forks via replication fork reversal (RFR). RuvA specifically binds to HJ cruciform DNA, conferring on it an open structure. The RuvB hexamer acts as an ATP-dependent pump, pulling dsDNA into and through the RuvAB complex. RuvB forms 2 homohexamers on either side of HJ DNA bound by 1 or 2 RuvA tetramers; 4 subunits per hexamer contact DNA at a time. Coordinated motions by a converter formed by DNA-disengaged RuvB subunits stimulates ATP hydrolysis and nucleotide exchange. Immobilization of the converter enables RuvB to convert the ATP-contained energy into a lever motion, pulling 2 nucleotides of DNA out of the RuvA tetramer per ATP hydrolyzed, thus driving DNA branch migration. The RuvB motors rotate together with the DNA substrate, which together with the progressing nucleotide cycle form the mechanistic basis for DNA recombination by continuous HJ branch migration. Branch migration allows RuvC to scan DNA until it finds its consensus sequence, where it cleaves and resolves cruciform DNA. The sequence is that of Holliday junction branch migration complex subunit RuvB from Escherichia coli (strain ATCC 8739 / DSM 1576 / NBRC 3972 / NCIMB 8545 / WDCM 00012 / Crooks).